The following is a 395-amino-acid chain: S-adenosylmethionine synthase (395 aa).

His-16 contributes to the ATP binding site. Residue Asp-18 participates in Mg(2+) binding. Glu-44 contacts K(+). 2 residues coordinate L-methionine: Glu-57 and Gln-100. Residues 100–110 (QSPDIAQGVDR) form a flexible loop region. ATP is bound by residues 167-169 (DAK), 233-234 (RF), Asp-242, 248-249 (RK), Ala-265, and Lys-269. Asp-242 is a binding site for L-methionine. Lys-273 contacts L-methionine.

The protein belongs to the AdoMet synthase family. In terms of assembly, homotetramer; dimer of dimers. The cofactor is Mg(2+). It depends on K(+) as a cofactor.

Its subcellular location is the cytoplasm. The enzyme catalyses L-methionine + ATP + H2O = S-adenosyl-L-methionine + phosphate + diphosphate. It functions in the pathway amino-acid biosynthesis; S-adenosyl-L-methionine biosynthesis; S-adenosyl-L-methionine from L-methionine: step 1/1. Its function is as follows. Catalyzes the formation of S-adenosylmethionine (AdoMet) from methionine and ATP. The overall synthetic reaction is composed of two sequential steps, AdoMet formation and the subsequent tripolyphosphate hydrolysis which occurs prior to release of AdoMet from the enzyme. The protein is S-adenosylmethionine synthase of Burkholderia vietnamiensis (strain G4 / LMG 22486) (Burkholderia cepacia (strain R1808)).